Reading from the N-terminus, the 167-residue chain is MLKSVRLYIPSIAVMILSSNIAIANKNYDAGNATPLRQVADLIDNQITNIDNLFKNRLSLYESNSIKSNFITKDKQYIIVMEVPGFDKSQIKVKVNGNKLFITGNIEEKNKADYSDNYMNKNFNYVISLYEDVDQANISSSLKNGILTIILPRIEIKEQEAREIVID.

The sHSP domain occupies 59–167 (SLYESNSIKS…EQEAREIVID (109 aa)).

It belongs to the small heat shock protein (HSP20) family.

The protein is Small heat shock protein C1 (hspC1) of Rickettsia conorii (strain ATCC VR-613 / Malish 7).